Reading from the N-terminus, the 737-residue chain is Catalase-peroxidase (737 aa).

A cross-link (tryptophyl-tyrosyl-methioninium (Trp-Tyr) (with M-245)) is located at residues 89–219 (WHSAGTYRVF…LAASHMGLIY (131 aa)). The active-site Proton acceptor is His-90. A cross-link (tryptophyl-tyrosyl-methioninium (Tyr-Met) (with W-89)) is located at residues 219 to 245 (YVNPEGPNGNPDPKAAARDIRVTFGRM). His-260 is a binding site for heme b.

It belongs to the peroxidase family. Peroxidase/catalase subfamily. As to quaternary structure, homodimer or homotetramer. It depends on heme b as a cofactor. Formation of the three residue Trp-Tyr-Met cross-link is important for the catalase, but not the peroxidase activity of the enzyme.

It localises to the cytoplasm. It carries out the reaction H2O2 + AH2 = A + 2 H2O. The catalysed reaction is 2 H2O2 = O2 + 2 H2O. In terms of biological role, bifunctional enzyme with both catalase and broad-spectrum peroxidase activity. This is Catalase-peroxidase from Aspergillus terreus (strain NIH 2624 / FGSC A1156).